The following is a 188-amino-acid chain: GMP synthase [glutamine-hydrolyzing] subunit A (188 aa).

A Glutamine amidotransferase type-1 domain is found at 3 to 188 (KVLVVAFGGQ…FQNFVELCKR (186 aa)). Cys-79 acts as the Nucleophile in catalysis. Residues His-166 and Glu-168 contribute to the active site.

As to quaternary structure, heterodimer composed of a glutamine amidotransferase subunit (A) and a GMP-binding subunit (B).

It catalyses the reaction XMP + L-glutamine + ATP + H2O = GMP + L-glutamate + AMP + diphosphate + 2 H(+). Its pathway is purine metabolism; GMP biosynthesis; GMP from XMP (L-Gln route): step 1/1. In terms of biological role, catalyzes the synthesis of GMP from XMP. The polypeptide is GMP synthase [glutamine-hydrolyzing] subunit A (Ignicoccus hospitalis (strain KIN4/I / DSM 18386 / JCM 14125)).